The primary structure comprises 306 residues: Axin interactor, dorsalization-associated protein (306 aa).

Residues 27 to 62 are a coiled coil; that stretch reads QLVEAIDEYQILARHLQKEAQAQHNNSEFTEEQKKT. The span at 128–138 shows a compositional bias: acidic residues; that stretch reads NLEFEEDEEEG. The interval 128–153 is disordered; the sequence is NLEFEEDEEEGGAGAGSPDSFPARVP. Ser-144 carries the post-translational modification Phosphoserine. An axin-binding region spans residues 154–221; the sequence is GTLLPRLPSE…RKEDTYVHFN (68 aa). In terms of domain architecture, C2 Aida-type spans 157 to 304; the sequence is LPRLPSEPGM…LYLHLHQTLH (148 aa).

Belongs to the AIDA family. As to quaternary structure, interacts with AXIN1. As to expression, widely expressed in adult tissues, with highest expression in the heart and skeletal muscle.

Functionally, acts as a ventralizing factor during embryogenesis. Inhibits axin-mediated JNK activation by binding axin and disrupting axin homodimerization. This in turn antagonizes a Wnt/beta-catenin-independent dorsalization pathway activated by AXIN/JNK-signaling. This is Axin interactor, dorsalization-associated protein (AIDA) from Homo sapiens (Human).